The primary structure comprises 202 residues: MNKQITKELLEIGAVQINLDTYFTWTSGLKSPIYCDNRLTMSYPKVRKNIARAFILMLEQDGFKPDVIAGCATAGISHAAWLSDLLGLPMVYVRSKPKGHGKGNQIEGASVEGKTVLVIEDLISTGGSSIEAAKALQQAGANILAVYSIFTYGLDKSKDAFLQANIAYNSITGFDELIQELIGSGELSEEEKNELLTFRESL.

5-phospho-alpha-D-ribose 1-diphosphate contacts are provided by residues R94, K98, H100, and 120-128 (EDLISTGGS). Orotate is bound at residue S124.

This sequence belongs to the purine/pyrimidine phosphoribosyltransferase family. PyrE subfamily. Homodimer. Mg(2+) is required as a cofactor.

The catalysed reaction is orotidine 5'-phosphate + diphosphate = orotate + 5-phospho-alpha-D-ribose 1-diphosphate. It participates in pyrimidine metabolism; UMP biosynthesis via de novo pathway; UMP from orotate: step 1/2. In terms of biological role, catalyzes the transfer of a ribosyl phosphate group from 5-phosphoribose 1-diphosphate to orotate, leading to the formation of orotidine monophosphate (OMP). This is Orotate phosphoribosyltransferase from Oceanobacillus iheyensis (strain DSM 14371 / CIP 107618 / JCM 11309 / KCTC 3954 / HTE831).